A 64-amino-acid chain; its full sequence is Bowman-Birk type trypsin inhibitor TI1 (64 aa).

Disulfide bonds link Cys-9–Cys-61, Cys-10–Cys-25, Cys-15–Cys-23, Cys-32–Cys-39, and Cys-36–Cys-49.

It belongs to the Bowman-Birk serine protease inhibitor family.

This chain is Bowman-Birk type trypsin inhibitor TI1, found in Coix lacryma-jobi (Job's tears).